A 156-amino-acid chain; its full sequence is RNA polymerase sigma factor SigS (156 aa).

The Polymerase core binding signature appears at 29–44; sequence EYYQLLLIKMWQLSQI. Residues 126–145 constitute a DNA-binding region (H-T-H motif); sequence QYEIADIMSLSTSTIKLIKA.

It belongs to the sigma-70 factor family.

Functionally, sigma factors are initiation factors that promote the attachment of RNA polymerase to specific initiation sites and are then released. Sigma-S contributes to the protection against external stress, thus playing a role in cellular fitness and survival. This Staphylococcus aureus (strain MRSA252) protein is RNA polymerase sigma factor SigS (sigS).